Reading from the N-terminus, the 187-residue chain is Adenine phosphoribosyltransferase (187 aa).

Ala133–Ser137 contributes to the AMP binding site.

This sequence belongs to the purine/pyrimidine phosphoribosyltransferase family. Homodimer. Mg(2+) is required as a cofactor.

The protein localises to the cytoplasm. It is found in the nucleus. It carries out the reaction AMP + diphosphate = 5-phospho-alpha-D-ribose 1-diphosphate + adenine. It functions in the pathway purine metabolism; AMP biosynthesis via salvage pathway; AMP from adenine: step 1/1. Catalyzes a salvage reaction resulting in the formation of AMP, that is energically less costly than de novo synthesis. The sequence is that of Adenine phosphoribosyltransferase (APT1) from Kluyveromyces lactis (strain ATCC 8585 / CBS 2359 / DSM 70799 / NBRC 1267 / NRRL Y-1140 / WM37) (Yeast).